We begin with the raw amino-acid sequence, 286 residues long: ATP synthase gamma chain (286 aa).

Belongs to the ATPase gamma chain family. As to quaternary structure, F-type ATPases have 2 components, CF(1) - the catalytic core - and CF(0) - the membrane proton channel. CF(1) has five subunits: alpha(3), beta(3), gamma(1), delta(1), epsilon(1). CF(0) has three main subunits: a, b and c.

Its subcellular location is the cell inner membrane. Produces ATP from ADP in the presence of a proton gradient across the membrane. The gamma chain is believed to be important in regulating ATPase activity and the flow of protons through the CF(0) complex. This is ATP synthase gamma chain from Pseudomonas fluorescens (strain ATCC BAA-477 / NRRL B-23932 / Pf-5).